The following is a 178-amino-acid chain: Interleukin-10 (178 aa).

The N-terminal stretch at 1–18 (MPRSALLCCLILLAGVAA) is a signal peptide. Disulfide bonds link C30/C126 and C80/C132. Residue N134 is glycosylated (N-linked (GlcNAc...) asparagine).

The protein belongs to the IL-10 family. Homodimer. Interacts with IL10RA and IL10RB.

The protein resides in the secreted. Functionally, major immune regulatory cytokine that acts on many cells of the immune system where it has profound anti-inflammatory functions, limiting excessive tissue disruption caused by inflammation. Mechanistically, IL10 binds to its heterotetrameric receptor comprising IL10RA and IL10RB leading to JAK1 and STAT2-mediated phosphorylation of STAT3. In turn, STAT3 translocates to the nucleus where it drives expression of anti-inflammatory mediators. Targets antigen-presenting cells (APCs) such as macrophages and monocytes and inhibits their release of pro-inflammatory cytokines including granulocyte-macrophage colony-stimulating factor /GM-CSF, granulocyte colony-stimulating factor/G-CSF, IL-1 alpha, IL-1 beta, IL-6, IL-8 and TNF-alpha. Also interferes with antigen presentation by reducing the expression of MHC-class II and co-stimulatory molecules, thereby inhibiting their ability to induce T cell activation. In addition, controls the inflammatory response of macrophages by reprogramming essential metabolic pathways including mTOR signaling. This chain is Interleukin-10 (IL10), found in Lama glama (Llama).